The sequence spans 351 residues: S-adenosylmethionine:tRNA ribosyltransferase-isomerase (351 aa).

It belongs to the QueA family. As to quaternary structure, monomer.

The protein localises to the cytoplasm. The catalysed reaction is 7-aminomethyl-7-carbaguanosine(34) in tRNA + S-adenosyl-L-methionine = epoxyqueuosine(34) in tRNA + adenine + L-methionine + 2 H(+). It participates in tRNA modification; tRNA-queuosine biosynthesis. In terms of biological role, transfers and isomerizes the ribose moiety from AdoMet to the 7-aminomethyl group of 7-deazaguanine (preQ1-tRNA) to give epoxyqueuosine (oQ-tRNA). In Hydrogenovibrio crunogenus (strain DSM 25203 / XCL-2) (Thiomicrospira crunogena), this protein is S-adenosylmethionine:tRNA ribosyltransferase-isomerase.